Here is a 269-residue protein sequence, read N- to C-terminus: Cytochrome c oxidase subunit 3 (269 aa).

Helical transmembrane passes span 46-66 (NSYYLFFISLILVISSMAFWF), 90-110 (GVILFIVSEALFFLAIFWAFF), 138-160 (PLLNTVILLSSGATVTYAHHSLI), 167-187 (ALYGSIITILLAIIFTVFQGV), 207-227 (FGTGFHGFHVIIGTIFLAVAL), and 247-267 (ILYWHFVDVVWLFLYVSIYYW).

It belongs to the cytochrome c oxidase subunit 3 family. As to quaternary structure, component of the cytochrome c oxidase (complex IV, CIV), a multisubunit enzyme composed of a catalytic core of 3 subunits and several supernumerary subunits. The complex exists as a monomer or a dimer and forms supercomplexes (SCs) in the inner mitochondrial membrane with ubiquinol-cytochrome c oxidoreductase (cytochrome b-c1 complex, complex III, CIII).

Its subcellular location is the mitochondrion inner membrane. It carries out the reaction 4 Fe(II)-[cytochrome c] + O2 + 8 H(+)(in) = 4 Fe(III)-[cytochrome c] + 2 H2O + 4 H(+)(out). Component of the cytochrome c oxidase, the last enzyme in the mitochondrial electron transport chain which drives oxidative phosphorylation. The respiratory chain contains 3 multisubunit complexes succinate dehydrogenase (complex II, CII), ubiquinol-cytochrome c oxidoreductase (cytochrome b-c1 complex, complex III, CIII) and cytochrome c oxidase (complex IV, CIV), that cooperate to transfer electrons derived from NADH and succinate to molecular oxygen, creating an electrochemical gradient over the inner membrane that drives transmembrane transport and the ATP synthase. Cytochrome c oxidase is the component of the respiratory chain that catalyzes the reduction of oxygen to water. Electrons originating from reduced cytochrome c in the intermembrane space (IMS) are transferred via the dinuclear copper A center (CU(A)) of subunit 2 and heme A of subunit 1 to the active site in subunit 1, a binuclear center (BNC) formed by heme A3 and copper B (CU(B)). The BNC reduces molecular oxygen to 2 water molecules using 4 electrons from cytochrome c in the IMS and 4 protons from the mitochondrial matrix. This chain is Cytochrome c oxidase subunit 3 (COIII), found in Podospora anserina (strain S / ATCC MYA-4624 / DSM 980 / FGSC 10383) (Pleurage anserina).